An 895-amino-acid chain; its full sequence is uncharacterized protein (895 aa).

Residues 257–283 (KSHKYPPGPPDNSSSNTSGQQNTSNTS) form a disordered region. The span at 268-283 (NSSSNTSGQQNTSNTS) shows a compositional bias: low complexity.

This is an uncharacterized protein from Acanthamoeba polyphaga mimivirus (APMV).